A 330-amino-acid chain; its full sequence is Phosphate acyltransferase (330 aa).

This sequence belongs to the PlsX family. Homodimer. Probably interacts with PlsY.

The protein localises to the cytoplasm. It carries out the reaction a fatty acyl-[ACP] + phosphate = an acyl phosphate + holo-[ACP]. The protein operates within lipid metabolism; phospholipid metabolism. Functionally, catalyzes the reversible formation of acyl-phosphate (acyl-PO(4)) from acyl-[acyl-carrier-protein] (acyl-ACP). This enzyme utilizes acyl-ACP as fatty acyl donor, but not acyl-CoA. This Streptococcus agalactiae serotype Ia (strain ATCC 27591 / A909 / CDC SS700) protein is Phosphate acyltransferase.